We begin with the raw amino-acid sequence, 631 residues long: Biotin--protein ligase (631 aa).

Positions 341-553 (ELYAKLINGC…QFDRYHRLLL (213 aa)) constitute a BPL/LPL catalytic domain.

Belongs to the biotin--protein ligase family. Monomer.

Its subcellular location is the cytoplasm. The catalysed reaction is apo-[methylmalonyl-CoA:pyruvate carboxytransferase] + biotin + ATP = holo-[methylmalonyl-CoA:pyruvate carboxytransferase] + AMP + diphosphate + H(+). It carries out the reaction apo-[propionyl-CoA:carbon-dioxide ligase (ADP-forming)] + biotin + ATP = holo-[propionyl-CoA:carbon-dioxide ligase (ADP-forming)] + AMP + diphosphate + H(+). The enzyme catalyses apo-[3-methylcrotonoyl-CoA:carbon-dioxide ligase (ADP-forming)] + biotin + ATP = holo-[3-methylcrotonoyl-CoA:carbon-dioxide ligase (ADP-forming)] + AMP + diphosphate + H(+). It catalyses the reaction biotin + L-lysyl-[protein] + ATP = N(6)-biotinyl-L-lysyl-[protein] + AMP + diphosphate + H(+). In terms of biological role, post-translational modification of specific protein by attachment of biotin. Acts on various carboxylases such as acetyl-CoA-carboxylase, pyruvate carboxylase, propionyl CoA carboxylase, and 3-methylcrotonyl CoA carboxylase. In Schizosaccharomyces pombe (strain 972 / ATCC 24843) (Fission yeast), this protein is Biotin--protein ligase (bpl1).